The chain runs to 277 residues: Chitosanase (277 aa).

The N-terminal stretch at 1 to 35 is a signal peptide; it reads MKISMQKADFWKKAAISLLVFTMFFTLMMSETVFA. Glutamate 54 serves as the catalytic Proton donor. Aspartate 70 serves as the catalytic Nucleophile.

Belongs to the glycosyl hydrolase 46 family.

It localises to the secreted. It catalyses the reaction Endohydrolysis of beta-(1-&gt;4)-linkages between D-glucosamine residues in a partly acetylated chitosan.. In terms of biological role, aids in the defense against invading fungal pathogens by degrading their cell wall chitosan. The chain is Chitosanase (csn) from Bacillus subtilis (strain 168).